A 435-amino-acid polypeptide reads, in one-letter code: Probable E3 ubiquitin-protein ligase makorin-1 (435 aa).

2 consecutive C3H1-type zinc fingers follow at residues 18–45 (WTKH…HDLT) and 48–75 (KPAA…HCKP). Residues 81–109 (LPAPQMLPLPSASLAGPSDPEPSGPTPVP) form a disordered region. Residues 99–108 (DPEPSGPTPV) are compositionally biased toward pro residues. Residues 155–182 (QLRKQLCPYAAVGECRYGINCAYLHGDV) form a C3H1-type 3 zinc finger. The interval 183-210 (CYMCGLQVLHPTDNNQRSEHTKACIEAH) is makorin-type Cys-His. Residues 228-282 (CGVCMEVVFEKANPSERRFGILSNCSHCYCLKCIRKWRSAKQFESKIIKSCPECR) form an RING-type zinc finger. The C3H1-type 4 zinc-finger motif lies at 311–340 (GMGSKPCRYFDEGRGTCPFGSNCFYKHAFP). The disordered stretch occupies residues 345-369 (EEAQPQRRQTGSNSRNRNSRRTPLW).

Weakly expressed in adult brain, heart and kidney.

It carries out the reaction S-ubiquitinyl-[E2 ubiquitin-conjugating enzyme]-L-cysteine + [acceptor protein]-L-lysine = [E2 ubiquitin-conjugating enzyme]-L-cysteine + N(6)-ubiquitinyl-[acceptor protein]-L-lysine.. It participates in protein modification; protein ubiquitination. In terms of biological role, E3 ubiquitin ligase catalyzing the covalent attachment of ubiquitin moieties onto substrate proteins. The polypeptide is Probable E3 ubiquitin-protein ligase makorin-1 (Seriola quinqueradiata (Five-ray yellowtail)).